Consider the following 426-residue polypeptide: Trigger factor (426 aa).

The region spanning 166–249 (GDIVTFDFKG…IIEVKARELP (84 aa)) is the PPIase FKBP-type domain.

The protein belongs to the FKBP-type PPIase family. Tig subfamily.

It is found in the cytoplasm. It carries out the reaction [protein]-peptidylproline (omega=180) = [protein]-peptidylproline (omega=0). Its function is as follows. Involved in protein export. Acts as a chaperone by maintaining the newly synthesized protein in an open conformation. Functions as a peptidyl-prolyl cis-trans isomerase. The chain is Trigger factor from Mesoplasma florum (strain ATCC 33453 / NBRC 100688 / NCTC 11704 / L1) (Acholeplasma florum).